The primary structure comprises 334 residues: Holliday junction branch migration complex subunit RuvB (334 aa).

The interval 1 to 181 (MQDRLISGTE…FGIVQRLEFY (181 aa)) is large ATPase domain (RuvB-L). ATP is bound by residues isoleucine 20, arginine 21, glycine 62, lysine 65, threonine 66, threonine 67, 128–130 (EDY), arginine 171, tyrosine 181, and arginine 218. Threonine 66 contacts Mg(2+). A small ATPAse domain (RuvB-S) region spans residues 182–252 (SVEDLTHIVS…MAQRALDMLN (71 aa)). The tract at residues 255 to 334 (KAGLDTLDRR…FGMTPPEPKN (80 aa)) is head domain (RuvB-H). Arginine 310 and arginine 315 together coordinate DNA.

This sequence belongs to the RuvB family. As to quaternary structure, homohexamer. Forms an RuvA(8)-RuvB(12)-Holliday junction (HJ) complex. HJ DNA is sandwiched between 2 RuvA tetramers; dsDNA enters through RuvA and exits via RuvB. An RuvB hexamer assembles on each DNA strand where it exits the tetramer. Each RuvB hexamer is contacted by two RuvA subunits (via domain III) on 2 adjacent RuvB subunits; this complex drives branch migration. In the full resolvosome a probable DNA-RuvA(4)-RuvB(12)-RuvC(2) complex forms which resolves the HJ.

The protein resides in the cytoplasm. The catalysed reaction is ATP + H2O = ADP + phosphate + H(+). Its function is as follows. The RuvA-RuvB-RuvC complex processes Holliday junction (HJ) DNA during genetic recombination and DNA repair, while the RuvA-RuvB complex plays an important role in the rescue of blocked DNA replication forks via replication fork reversal (RFR). RuvA specifically binds to HJ cruciform DNA, conferring on it an open structure. The RuvB hexamer acts as an ATP-dependent pump, pulling dsDNA into and through the RuvAB complex. RuvB forms 2 homohexamers on either side of HJ DNA bound by 1 or 2 RuvA tetramers; 4 subunits per hexamer contact DNA at a time. Coordinated motions by a converter formed by DNA-disengaged RuvB subunits stimulates ATP hydrolysis and nucleotide exchange. Immobilization of the converter enables RuvB to convert the ATP-contained energy into a lever motion, pulling 2 nucleotides of DNA out of the RuvA tetramer per ATP hydrolyzed, thus driving DNA branch migration. The RuvB motors rotate together with the DNA substrate, which together with the progressing nucleotide cycle form the mechanistic basis for DNA recombination by continuous HJ branch migration. Branch migration allows RuvC to scan DNA until it finds its consensus sequence, where it cleaves and resolves cruciform DNA. This is Holliday junction branch migration complex subunit RuvB from Acinetobacter baumannii (strain AB307-0294).